A 279-amino-acid polypeptide reads, in one-letter code: Phosphonoacetaldehyde hydrolase (279 aa).

Aspartate 20 acts as the Nucleophile in catalysis. Mg(2+)-binding residues include aspartate 20 and alanine 22. The active-site Schiff-base intermediate with substrate is lysine 62. Aspartate 196 serves as a coordination point for Mg(2+).

The protein belongs to the HAD-like hydrolase superfamily. PhnX family. In terms of assembly, homodimer. Mg(2+) serves as cofactor.

The catalysed reaction is phosphonoacetaldehyde + H2O = acetaldehyde + phosphate + H(+). Its function is as follows. Involved in phosphonate degradation. In Aeromonas hydrophila subsp. hydrophila (strain ATCC 7966 / DSM 30187 / BCRC 13018 / CCUG 14551 / JCM 1027 / KCTC 2358 / NCIMB 9240 / NCTC 8049), this protein is Phosphonoacetaldehyde hydrolase.